The following is a 307-amino-acid chain: Aspartate carbamoyltransferase catalytic subunit (307 aa).

Carbamoyl phosphate-binding residues include Arg-59 and Thr-60. An L-aspartate-binding site is contributed by Lys-87. Carbamoyl phosphate-binding residues include Arg-109, His-137, and Gln-140. L-aspartate contacts are provided by Arg-173 and Arg-223. Positions 266 and 267 each coordinate carbamoyl phosphate.

Belongs to the aspartate/ornithine carbamoyltransferase superfamily. ATCase family. In terms of assembly, heterododecamer (2C3:3R2) of six catalytic PyrB chains organized as two trimers (C3), and six regulatory PyrI chains organized as three dimers (R2).

The catalysed reaction is carbamoyl phosphate + L-aspartate = N-carbamoyl-L-aspartate + phosphate + H(+). It functions in the pathway pyrimidine metabolism; UMP biosynthesis via de novo pathway; (S)-dihydroorotate from bicarbonate: step 2/3. Its function is as follows. Catalyzes the condensation of carbamoyl phosphate and aspartate to form carbamoyl aspartate and inorganic phosphate, the committed step in the de novo pyrimidine nucleotide biosynthesis pathway. The polypeptide is Aspartate carbamoyltransferase catalytic subunit (Helicobacter pylori (strain G27)).